The chain runs to 330 residues: Ribosomal RNA small subunit methyltransferase H (330 aa).

S-adenosyl-L-methionine-binding positions include 35-37, Asp53, Phe80, Asp101, and Gln108; that span reads GGY.

Belongs to the methyltransferase superfamily. RsmH family.

The protein resides in the cytoplasm. The catalysed reaction is cytidine(1402) in 16S rRNA + S-adenosyl-L-methionine = N(4)-methylcytidine(1402) in 16S rRNA + S-adenosyl-L-homocysteine + H(+). Functionally, specifically methylates the N4 position of cytidine in position 1402 (C1402) of 16S rRNA. The chain is Ribosomal RNA small subunit methyltransferase H from Rhodopseudomonas palustris (strain BisB18).